Here is a 359-residue protein sequence, read N- to C-terminus: Peptide chain release factor 1 (359 aa).

The residue at position 236 (Gln-236) is an N5-methylglutamine.

It belongs to the prokaryotic/mitochondrial release factor family. In terms of processing, methylated by PrmC. Methylation increases the termination efficiency of RF1.

It localises to the cytoplasm. Peptide chain release factor 1 directs the termination of translation in response to the peptide chain termination codons UAG and UAA. This chain is Peptide chain release factor 1, found in Malacoplasma penetrans (strain HF-2) (Mycoplasma penetrans).